A 393-amino-acid polypeptide reads, in one-letter code: MATACPPLSLPSTSLFRGRSARAGPNAGSSRPSAAAPSERRSWRRPRPDGGRAAAGERNQREEVERPPVWLMRQAGRYMKSYQLLCERYPSFRERSENVDLVVEISLQPWKVFKPDGVILFSDILTPLPGMNIPFDIVKGKGPVIYDPLRTAAAVNEVREFVPEEWVPYVGQALNILRQEVKNEAAVLGFVGAPFTLASYCVEGGSSKNFTLIKKMAFSEPAILHNLLQKFTTSMANYIKYQADNGAQAVQIFDSWATELSPADFEEFSLPYLKQIVDSVRETHPDLPLILYASGSGGLLERLPLTGVDVVSLDWTVDMAEGRKRLGSNTAVQGNVDPGVLFGSKEFITRRIYDTVQKAGNVGHVLNLGHGIKVGTPEENVAHFFEVAKGIRY.

A disordered region spans residues 1–64 (MATACPPLSL…AGERNQREEV (64 aa)). A compositionally biased stretch (low complexity) spans 23–37 (AGPNAGSSRPSAAAP). Over residues 38–50 (SERRSWRRPRPDG) the composition is skewed to basic and acidic residues. Residues 73–77 (RQAGR), Phe-92, Ser-122, Asp-123, Tyr-200, Ser-255, and His-370 each bind substrate.

This sequence belongs to the uroporphyrinogen decarboxylase family. In terms of assembly, homodimer.

The protein resides in the plastid. The protein localises to the chloroplast. It catalyses the reaction uroporphyrinogen III + 4 H(+) = coproporphyrinogen III + 4 CO2. It participates in porphyrin-containing compound metabolism; protoporphyrin-IX biosynthesis; coproporphyrinogen-III from 5-aminolevulinate: step 4/4. Catalyzes the decarboxylation of four acetate groups of uroporphyrinogen-III to yield coproporphyrinogen-III. The protein is Uroporphyrinogen decarboxylase, chloroplastic (LES22) of Zea mays (Maize).